A 303-amino-acid polypeptide reads, in one-letter code: 2-dehydropantoate 2-reductase (303 aa).

NADP(+) contacts are provided by residues 7-12, asparagine 98, and alanine 122; that span reads GCGALG. Position 98 (asparagine 98) interacts with substrate. Catalysis depends on lysine 176, which acts as the Proton donor. Substrate is bound by residues asparagine 180, asparagine 184, asparagine 194, and serine 244. An NADP(+)-binding site is contributed by glutamate 256.

Belongs to the ketopantoate reductase family. As to quaternary structure, monomer.

The protein resides in the cytoplasm. It carries out the reaction (R)-pantoate + NADP(+) = 2-dehydropantoate + NADPH + H(+). Its pathway is cofactor biosynthesis; (R)-pantothenate biosynthesis; (R)-pantoate from 3-methyl-2-oxobutanoate: step 2/2. Its function is as follows. Catalyzes the NADPH-dependent reduction of ketopantoate into pantoic acid. The protein is 2-dehydropantoate 2-reductase (panE) of Shigella flexneri.